We begin with the raw amino-acid sequence, 427 residues long: Acetyl-CoA acetyltransferase, mitochondrial (427 aa).

A mitochondrion-targeting transit peptide spans 1–33 (MAVLAALLRSGARSRSPLLRRLVQEIRYVERSY). Position 66 is an N6-acetyllysine; alternate (lysine 66). The residue at position 66 (lysine 66) is an N6-succinyllysine; alternate. Residue lysine 78 is modified to N6-succinyllysine. Cysteine 126 functions as the Acyl-thioester intermediate in the catalytic mechanism. An N6-acetyllysine; alternate mark is found at lysine 174, lysine 181, lysine 190, and lysine 202. Residues lysine 174, lysine 181, lysine 190, and lysine 202 each carry the N6-succinyllysine; alternate modification. Tyrosine 219 is a CoA binding site. Tyrosine 219 contacts K(+). 2 positions are modified to N6-acetyllysine; alternate: lysine 223 and lysine 230. N6-succinyllysine; alternate occurs at positions 223 and 230. At lysine 243 the chain carries N6-succinyllysine. N6-acetyllysine occurs at positions 251 and 257. Residues 258-260 (RVD) and lysine 263 each bind CoA. Lysine 263 carries the post-translational modification N6-acetyllysine; alternate. Lysine 263 is modified (N6-succinyllysine; alternate). 2 positions are modified to N6-succinyllysine: lysine 266 and lysine 268. Lysine 273 is subject to N6-acetyllysine. K(+) contacts are provided by alanine 280, alanine 281, and alanine 283. A CoA-binding site is contributed by serine 284. At lysine 338 the chain carries N6-acetyllysine. Valine 381 serves as a coordination point for K(+). Cysteine 413 (proton donor/acceptor) is an active-site residue.

This sequence belongs to the thiolase-like superfamily. Thiolase family. Homotetramer. Succinylation at Lys-268, adjacent to a coenzyme A binding site. Desuccinylated by SIRT5.

It localises to the mitochondrion. The enzyme catalyses 2 acetyl-CoA = acetoacetyl-CoA + CoA. The catalysed reaction is propanoyl-CoA + acetyl-CoA = 2-methyl-3-oxobutanoyl-CoA + CoA. It participates in lipid metabolism; fatty acid beta-oxidation. With respect to regulation, activated by potassium ions, but not sodium ions. Functionally, this is one of the enzymes that catalyzes the last step of the mitochondrial beta-oxidation pathway, an aerobic process breaking down fatty acids into acetyl-CoA. Using free coenzyme A/CoA, catalyzes the thiolytic cleavage of medium- to long-chain 3-oxoacyl-CoAs into acetyl-CoA and a fatty acyl-CoA shortened by two carbon atoms. The activity of the enzyme is reversible and it can also catalyze the condensation of two acetyl-CoA molecules into acetoacetyl-CoA. Thereby, it plays a major role in ketone body metabolism. The polypeptide is Acetyl-CoA acetyltransferase, mitochondrial (ACAT1) (Homo sapiens (Human)).